A 249-amino-acid polypeptide reads, in one-letter code: Cell division protein FtsQ (249 aa).

Residues 1 to 6 (MKFILF) lie on the Cytoplasmic side of the membrane. The helical transmembrane segment at 7–23 (ALLVSAGSWYGWKQLHS) threads the bilayer. The Periplasmic portion of the chain corresponds to 24–249 (QDAVSKPIRY…YKNVMKERRI (226 aa)). Residues 29 to 98 (KPIRYVKIEG…DAVHIKITEQ (70 aa)) enclose the POTRA domain.

It belongs to the FtsQ/DivIB family. FtsQ subfamily. As to quaternary structure, part of a complex composed of FtsB, FtsL and FtsQ.

The protein localises to the cell inner membrane. Functionally, essential cell division protein. May link together the upstream cell division proteins, which are predominantly cytoplasmic, with the downstream cell division proteins, which are predominantly periplasmic. May control correct divisome assembly. This chain is Cell division protein FtsQ, found in Methylomonas methanica (strain DSM 25384 / MC09).